The sequence spans 338 residues: MTQKKNKPTQKKKGLHPRNPHSQRYDFNALILSCPDLTPFVAENQFGDLSVDFSDPAAVKMLNKALLHHFYNVENWDIPPGYLCPPIPGRADYIHHIADLLAKSNEGVIPQGKHINGLDIGMGANCVYPIIGHRAYGWRFVGSDVDALSIKSAKFIVESNRSLAGGIKCRLQKKSDNIFTGIINANDIFDFTMCNPPFHASLEEATAGSERKVRNLSANAHKKGSNKKAELFAKSNTNKPVLNFGGQKAELWCPGGEDAFIQRMITESSDKPENCFWYSTLVSKKENLPALYKALKQVNAVDVRTIDMAQGQKVTRIVAWTFLSKGQQTQWREERWSA.

The disordered stretch occupies residues 1–21; that stretch reads MTQKKNKPTQKKKGLHPRNPH.

The protein belongs to the methyltransferase superfamily. METTL16/RlmF family.

Its subcellular location is the cytoplasm. The catalysed reaction is adenosine(1618) in 23S rRNA + S-adenosyl-L-methionine = N(6)-methyladenosine(1618) in 23S rRNA + S-adenosyl-L-homocysteine + H(+). In terms of biological role, specifically methylates the adenine in position 1618 of 23S rRNA. The sequence is that of Ribosomal RNA large subunit methyltransferase F from Photobacterium profundum (strain SS9).